Reading from the N-terminus, the 667-residue chain is Bifunctional polymyxin resistance protein ArnA (667 aa).

Residues 1–304 (MKAIVFAYHD…EMGIVTDVRL (304 aa)) form a formyltransferase ArnAFT region. Histidine 104 (proton donor; for formyltransferase activity) is an active-site residue. (6R)-10-formyltetrahydrofolate-binding positions include arginine 114 and 136–140 (VKKAD). Positions 314–667 (RRTRVLILGV…TAAPKDELNA (354 aa)) are dehydrogenase ArnADH. Residues aspartate 347 and 368–369 (DI) contribute to the NAD(+) site. Residues alanine 393, tyrosine 398, and 432–433 (TS) each bind UDP-alpha-D-glucuronate. The active-site Proton acceptor; for decarboxylase activity is the glutamate 434. UDP-alpha-D-glucuronate contacts are provided by residues arginine 460, asparagine 492, 526–535 (KLVDGGAQKR), and tyrosine 613. Catalysis depends on arginine 619, which acts as the Proton donor; for decarboxylase activity.

This sequence in the N-terminal section; belongs to the Fmt family. UDP-L-Ara4N formyltransferase subfamily. In the C-terminal section; belongs to the NAD(P)-dependent epimerase/dehydratase family. UDP-glucuronic acid decarboxylase subfamily. Homohexamer, formed by a dimer of trimers.

It catalyses the reaction UDP-alpha-D-glucuronate + NAD(+) = UDP-beta-L-threo-pentopyranos-4-ulose + CO2 + NADH. It carries out the reaction UDP-4-amino-4-deoxy-beta-L-arabinose + (6R)-10-formyltetrahydrofolate = UDP-4-deoxy-4-formamido-beta-L-arabinose + (6S)-5,6,7,8-tetrahydrofolate + H(+). Its pathway is nucleotide-sugar biosynthesis; UDP-4-deoxy-4-formamido-beta-L-arabinose biosynthesis; UDP-4-deoxy-4-formamido-beta-L-arabinose from UDP-alpha-D-glucuronate: step 1/3. The protein operates within nucleotide-sugar biosynthesis; UDP-4-deoxy-4-formamido-beta-L-arabinose biosynthesis; UDP-4-deoxy-4-formamido-beta-L-arabinose from UDP-alpha-D-glucuronate: step 3/3. It functions in the pathway bacterial outer membrane biogenesis; lipopolysaccharide biosynthesis. Bifunctional enzyme that catalyzes the oxidative decarboxylation of UDP-glucuronic acid (UDP-GlcUA) to UDP-4-keto-arabinose (UDP-Ara4O) and the addition of a formyl group to UDP-4-amino-4-deoxy-L-arabinose (UDP-L-Ara4N) to form UDP-L-4-formamido-arabinose (UDP-L-Ara4FN). The modified arabinose is attached to lipid A and is required for resistance to polymyxin and cationic antimicrobial peptides. This is Bifunctional polymyxin resistance protein ArnA from Yersinia pseudotuberculosis serotype IB (strain PB1/+).